A 549-amino-acid chain; its full sequence is MSMFCFQCQETAKGTGCTIKGVCGKTADVANLQDLLLYVMKGIAINSLQARELGIVRQDVDKFVMEGLFATITNANFDNARFVALVREGLALRDSLKADIVKAGGVLPANLHDSAIWTADSAEEFEQKAAQVGILATENEDVRSLRELLIYGLKGMAAYAEHAFALGYEDNSIFAFMMKGLAATTDDSLSADQLVALVLEAGKYGVDVMALLDKANTTSYGNPEITKVNIGVRNNPAILISGHDLRDLEDLLKQTEGTGVDVYTHGEMLPAHYYPAFKKYAHFVGNYGNAWWKQDKEFDSFNGAILLTTNCLVPPKDSYKDRLFTTSVVGYEGVKHIPAREAGKVKDFSAVIELAKTLPAPTEIETGEIVGGFAHNQVFAVADKVVEAVKSGAVKRFFVMAGCDGRMKSRDYYTEFAKALPQDTIILTAGCAKYKYNKLALGDIGGIPRVLDAGQCNDSYSLAVIALKLKEVFGLDDVNQLPISYNIAWYEQKAVIVLLALLYLGVKNIHLGPTLPGFLSPNVAKVLVENFGIAGITTVEDDVNLFMGA.

4 residues coordinate [4Fe-4S] cluster: cysteine 5, cysteine 8, cysteine 17, and cysteine 23. Residues histidine 243, glutamate 267, cysteine 311, cysteine 403, cysteine 431, cysteine 456, glutamate 491, and lysine 493 each contribute to the hybrid [4Fe-2O-2S] cluster site. Cysteine 403 is subject to Cysteine persulfide.

The protein belongs to the HCP family. [4Fe-4S] cluster serves as cofactor. Hybrid [4Fe-2O-2S] cluster is required as a cofactor.

It is found in the cytoplasm. It carries out the reaction A + NH4(+) + H2O = hydroxylamine + AH2 + H(+). Functionally, catalyzes the reduction of hydroxylamine to form NH(3) and H(2)O. The protein is Hydroxylamine reductase of Desulfitobacterium hafniense (strain Y51).